We begin with the raw amino-acid sequence, 156 residues long: Ribosomal RNA large subunit methyltransferase H (156 aa).

Residues leucine 73, glycine 104, and 123–128 (LSPLTL) contribute to the S-adenosyl-L-methionine site.

This sequence belongs to the RNA methyltransferase RlmH family. As to quaternary structure, homodimer.

Its subcellular location is the cytoplasm. The enzyme catalyses pseudouridine(1915) in 23S rRNA + S-adenosyl-L-methionine = N(3)-methylpseudouridine(1915) in 23S rRNA + S-adenosyl-L-homocysteine + H(+). In terms of biological role, specifically methylates the pseudouridine at position 1915 (m3Psi1915) in 23S rRNA. This Hahella chejuensis (strain KCTC 2396) protein is Ribosomal RNA large subunit methyltransferase H.